Reading from the N-terminus, the 214-residue chain is Rho-related GTP-binding protein RhoJ (214 aa).

Residues cysteine 3 and cysteine 11 are each lipidated (S-palmitoyl cysteine). GTP contacts are provided by residues 31–36, 46–53, 75–79, 133–136, and 177–178; these read AVGKTC, FPEEYVPT, DTAGQ, TQID, and AL. The Effector region signature appears at 50–58; the sequence is YVPTVFDHY. At cysteine 211 the chain carries Cysteine methyl ester. Cysteine 211 carries S-farnesyl cysteine lipidation. A propeptide spans 212 to 214 (removed in mature form); that stretch reads AII.

The protein belongs to the small GTPase superfamily. Rho family. As to quaternary structure, interacts with the CRIB domains of proteins such as Pak1 and Was/Wasp. Interacts with GLUL. In terms of processing, palmitoylated; regulates localization to the plasma membrane and may be mediated by GLUL. As to expression, highly expressed in heart with moderate levels in lung and liver. Very low levels detected in brain, spleen, skeletal muscle, kidney and testis.

It localises to the cell membrane. Functionally, plasma membrane-associated small GTPase specifically involved in angiogenesis. Required for endothelial cell migration during vascular development via its interaction with GLUL. Elicits the formation of F-actin-rich structures, thereby regulating endothelial cell migration. This chain is Rho-related GTP-binding protein RhoJ (Rhoj), found in Mus musculus (Mouse).